Reading from the N-terminus, the 236-residue chain is DNA repair protein RecO (236 aa).

This sequence belongs to the RecO family.

In terms of biological role, involved in DNA repair and RecF pathway recombination. This chain is DNA repair protein RecO, found in Haemophilus influenzae (strain 86-028NP).